The following is a 459-amino-acid chain: tRNA modification GTPase MnmE (459 aa).

Positions 20, 85, and 124 each coordinate (6S)-5-formyl-5,6,7,8-tetrahydrofolate. Residues 221-380 form the TrmE-type G domain; it reads GLSTVIIGRP…LEEAIQSLFY (160 aa). Position 231 (Asn231) interacts with K(+). Residues 231-236, 250-256, and 275-278 each bind GTP; these read NVGKSS, TDIPGTT, and DTAG. Ser235 is a Mg(2+) binding site. K(+) is bound by residues Thr250, Ile252, and Thr255. Thr256 serves as a coordination point for Mg(2+). Position 459 (Lys459) interacts with (6S)-5-formyl-5,6,7,8-tetrahydrofolate.

The protein belongs to the TRAFAC class TrmE-Era-EngA-EngB-Septin-like GTPase superfamily. TrmE GTPase family. As to quaternary structure, homodimer. Heterotetramer of two MnmE and two MnmG subunits. It depends on K(+) as a cofactor.

Its subcellular location is the cytoplasm. Exhibits a very high intrinsic GTPase hydrolysis rate. Involved in the addition of a carboxymethylaminomethyl (cmnm) group at the wobble position (U34) of certain tRNAs, forming tRNA-cmnm(5)s(2)U34. The sequence is that of tRNA modification GTPase MnmE from Bacillus velezensis (strain DSM 23117 / BGSC 10A6 / LMG 26770 / FZB42) (Bacillus amyloliquefaciens subsp. plantarum).